We begin with the raw amino-acid sequence, 217 residues long: Somatotropin (217 aa).

An N-terminal signal peptide occupies residues 1–27 (MATGSHTATLLLAVALLGLPWPQEAGA). His-46 contacts Zn(2+). Cys-79 and Cys-190 are oxidised to a cystine. The residue at position 132 (Ser-132) is a Phosphoserine. Position 199 (Glu-199) interacts with Zn(2+). Residues Cys-207 and Cys-215 are joined by a disulfide bond.

This sequence belongs to the somatotropin/prolactin family.

The protein resides in the secreted. Functionally, plays an important role in growth control. Its major role in stimulating body growth is to stimulate the liver and other tissues to secrete IGF1. It stimulates both the differentiation and proliferation of myoblasts. It also stimulates amino acid uptake and protein synthesis in muscle and other tissues. The polypeptide is Somatotropin (GH1) (Xanthonycticebus pygmaeus (Pygmy slow loris)).